A 392-amino-acid chain; its full sequence is Methylthioribose-1-phosphate isomerase (392 aa).

Aspartate 267 functions as the Proton donor in the catalytic mechanism.

Belongs to the eIF-2B alpha/beta/delta subunits family. MtnA subfamily.

The protein resides in the cytoplasm. It is found in the nucleus. It carries out the reaction 5-(methylsulfanyl)-alpha-D-ribose 1-phosphate = 5-(methylsulfanyl)-D-ribulose 1-phosphate. It participates in amino-acid biosynthesis; L-methionine biosynthesis via salvage pathway; L-methionine from S-methyl-5-thio-alpha-D-ribose 1-phosphate: step 1/6. Functionally, catalyzes the interconversion of methylthioribose-1-phosphate (MTR-1-P) into methylthioribulose-1-phosphate (MTRu-1-P). In Blastomyces gilchristii (strain SLH14081) (Blastomyces dermatitidis), this protein is Methylthioribose-1-phosphate isomerase.